The chain runs to 389 residues: 11-beta-hydroxysteroid dehydrogenase-like 5 (389 aa).

The helical; Signal-anchor for type II membrane protein transmembrane segment at 11 to 31 threads the bilayer; the sequence is LVAPPATMVVMAFAWPLLSFI. Residues 56-82 and Asp107 contribute to the NADP(+) site; that span reads GASS…VARR. Ser186 is a substrate binding site. The Proton acceptor role is filled by Tyr199. Residues 199 to 203 and Lys203 contribute to the NADP(+) site; that span reads YSAAK. The tract at residues 337 to 381 is disordered; the sequence is LMLEGGPPRVPASPPRYTASPPHYTASPPRYPASPPRYPASPPRF. The segment covering 365 to 378 has biased composition (pro residues); that stretch reads PRYPASPPRYPASP.

Belongs to the short-chain dehydrogenases/reductases (SDR) family.

It is found in the membrane. The sequence is that of 11-beta-hydroxysteroid dehydrogenase-like 5 (HSD5) from Arabidopsis thaliana (Mouse-ear cress).